Here is a 610-residue protein sequence, read N- to C-terminus: Elongation factor 4 (610 aa).

In terms of domain architecture, tr-type G spans 11 to 193; sequence ENIRNFSIIA…QIVEKVPAPS (183 aa). GTP is bound by residues 23–28 and 140–143; these read DHGKST and NKID.

This sequence belongs to the TRAFAC class translation factor GTPase superfamily. Classic translation factor GTPase family. LepA subfamily.

The protein localises to the cell membrane. It carries out the reaction GTP + H2O = GDP + phosphate + H(+). Functionally, required for accurate and efficient protein synthesis under certain stress conditions. May act as a fidelity factor of the translation reaction, by catalyzing a one-codon backward translocation of tRNAs on improperly translocated ribosomes. Back-translocation proceeds from a post-translocation (POST) complex to a pre-translocation (PRE) complex, thus giving elongation factor G a second chance to translocate the tRNAs correctly. Binds to ribosomes in a GTP-dependent manner. In Streptococcus equi subsp. zooepidemicus (strain H70), this protein is Elongation factor 4.